The primary structure comprises 123 residues: Small ribosomal subunit protein uS13 (123 aa).

A disordered region spans residues 95-123 (GLPVRGQRTKTNARTRKGPARTVAGKKKK).

The protein belongs to the universal ribosomal protein uS13 family. As to quaternary structure, part of the 30S ribosomal subunit. Forms a loose heterodimer with protein S19. Forms two bridges to the 50S subunit in the 70S ribosome.

Functionally, located at the top of the head of the 30S subunit, it contacts several helices of the 16S rRNA. In the 70S ribosome it contacts the 23S rRNA (bridge B1a) and protein L5 of the 50S subunit (bridge B1b), connecting the 2 subunits; these bridges are implicated in subunit movement. Contacts the tRNAs in the A and P-sites. This chain is Small ribosomal subunit protein uS13, found in Heliobacterium modesticaldum (strain ATCC 51547 / Ice1).